The following is a 387-amino-acid chain: Sulfate adenylyltransferase (387 aa).

It belongs to the sulfate adenylyltransferase family.

The catalysed reaction is sulfate + ATP + H(+) = adenosine 5'-phosphosulfate + diphosphate. It participates in sulfur metabolism; hydrogen sulfide biosynthesis; sulfite from sulfate: step 1/3. The polypeptide is Sulfate adenylyltransferase (sat) (Deinococcus radiodurans (strain ATCC 13939 / DSM 20539 / JCM 16871 / CCUG 27074 / LMG 4051 / NBRC 15346 / NCIMB 9279 / VKM B-1422 / R1)).